Here is a 273-residue protein sequence, read N- to C-terminus: WIMGHMVNAIAQIDEFVNLGANSIETDVSFDKNANPEYTYHGIPCDCGRTCTKSEKFNVFLQGLQKATTPGDSKYQVKLVLVVFDLKSSSLYDNQASDAGKKLAKSLLQNYWKNGNNGGRAYIVLSIPNLTHYKLITGFKETPKTEGHPELMEKVGYDFSGNDDIDQVAKAYKKAGVTGHVWQSDGITNCLPRGLDRVKQAVANRDSSNGFINKVYYWTVGKRSTTRGALDAGVDGIMTNYPDVIADVLSESAYKSKFRIATYEDNPWETFKN.

Residue H5 is part of the active site. Positions 25 and 27 each coordinate Mg(2+). H41 serves as the catalytic Nucleophile. Disulfide bonds link C45–C51 and C47–C190. Position 85 (D85) interacts with Mg(2+).

Belongs to the arthropod phospholipase D family. Class II subfamily. Mg(2+) serves as cofactor. In terms of tissue distribution, expressed by the venom gland.

Its subcellular location is the secreted. The catalysed reaction is an N-(acyl)-sphingosylphosphocholine = an N-(acyl)-sphingosyl-1,3-cyclic phosphate + choline. The enzyme catalyses an N-(acyl)-sphingosylphosphoethanolamine = an N-(acyl)-sphingosyl-1,3-cyclic phosphate + ethanolamine. It carries out the reaction a 1-acyl-sn-glycero-3-phosphocholine = a 1-acyl-sn-glycero-2,3-cyclic phosphate + choline. It catalyses the reaction a 1-acyl-sn-glycero-3-phosphoethanolamine = a 1-acyl-sn-glycero-2,3-cyclic phosphate + ethanolamine. Dermonecrotic toxins cleave the phosphodiester linkage between the phosphate and headgroup of certain phospholipids (sphingolipid and lysolipid substrates), forming an alcohol (often choline) and a cyclic phosphate. This toxin acts on sphingomyelin (SM). It may also act on ceramide phosphoethanolamine (CPE), lysophosphatidylcholine (LPC) and lysophosphatidylethanolamine (LPE), but not on lysophosphatidylserine (LPS), and lysophosphatidylglycerol (LPG). It acts by transphosphatidylation, releasing exclusively cyclic phosphate products as second products. Induces dermonecrosis, hemolysis, increased vascular permeability, edema, inflammatory response, and platelet aggregation. This is Dermonecrotic toxin LdSicTox-alphaIB3avi from Loxosceles deserta (Desert recluse spider).